A 122-amino-acid chain; its full sequence is Large ribosomal subunit protein uL14 (122 aa).

The protein belongs to the universal ribosomal protein uL14 family. In terms of assembly, part of the 50S ribosomal subunit. Forms a cluster with proteins L3 and L19. In the 70S ribosome, L14 and L19 interact and together make contacts with the 16S rRNA in bridges B5 and B8.

Its function is as follows. Binds to 23S rRNA. Forms part of two intersubunit bridges in the 70S ribosome. The polypeptide is Large ribosomal subunit protein uL14 (Borrelia recurrentis (strain A1)).